A 276-amino-acid polypeptide reads, in one-letter code: MGQKVHPYSLRIKINRDWKSKWYFDKKLYSEILHEDFLIRRETMKFLKGIRFDISDIEIIRNNLQRVTVIISTPRPGSVIGVKGANLEKIGQLLTRKISKKINIKIKEIKKPEFDAQIVANGIAKQLENRASYRKLLKSSLLSSISKGVQGVKIKVSGRLGGAEIARSFEVKEGRIPLHTLRANIDYGFAEAQTTYGVIGVKVWLFKGEVLGKQTNSDAGQVINKKTSREKSEYFDKNRVDDKSKKVVNDDKFSRKKLEFGSKSNSSFKKKNGSDV.

The region spanning 39–110 (IRRETMKFLK…KINIKIKEIK (72 aa)) is the KH type-2 domain.

Belongs to the universal ribosomal protein uS3 family. In terms of assembly, part of the 30S ribosomal subunit. Forms a tight complex with proteins S10 and S14.

Binds the lower part of the 30S subunit head. Binds mRNA in the 70S ribosome, positioning it for translation. This Borrelia turicatae (strain 91E135) protein is Small ribosomal subunit protein uS3.